The chain runs to 119 residues: Large ribosomal subunit protein bL19 (119 aa).

It belongs to the bacterial ribosomal protein bL19 family.

Functionally, this protein is located at the 30S-50S ribosomal subunit interface and may play a role in the structure and function of the aminoacyl-tRNA binding site. This chain is Large ribosomal subunit protein bL19, found in Pelobacter propionicus (strain DSM 2379 / NBRC 103807 / OttBd1).